Reading from the N-terminus, the 489-residue chain is Ribulose bisphosphate carboxylase large chain 2 (489 aa).

Residues Asn128 and Thr178 each coordinate substrate. Lys180 (proton acceptor) is an active-site residue. Lys182 is a substrate binding site. Positions 206, 208, and 209 each coordinate Mg(2+). Lys206 carries the N6-carboxylysine modification. Catalysis depends on His298, which acts as the Proton acceptor. Positions 299, 331, and 383 each coordinate substrate.

Belongs to the RuBisCO large chain family. Type I subfamily. Heterohexadecamer of 8 large chains and 8 small chains. Requires Mg(2+) as cofactor.

The enzyme catalyses 2 (2R)-3-phosphoglycerate + 2 H(+) = D-ribulose 1,5-bisphosphate + CO2 + H2O. It catalyses the reaction D-ribulose 1,5-bisphosphate + O2 = 2-phosphoglycolate + (2R)-3-phosphoglycerate + 2 H(+). Functionally, ruBisCO catalyzes two reactions: the carboxylation of D-ribulose 1,5-bisphosphate, the primary event in carbon dioxide fixation, as well as the oxidative fragmentation of the pentose substrate. Both reactions occur simultaneously and in competition at the same active site. In Nitrobacter winogradskyi (strain ATCC 25391 / DSM 10237 / CIP 104748 / NCIMB 11846 / Nb-255), this protein is Ribulose bisphosphate carboxylase large chain 2.